The primary structure comprises 132 residues: Small ribosomal subunit protein uS11 (132 aa).

It belongs to the universal ribosomal protein uS11 family. Part of the 30S ribosomal subunit.

Its function is as follows. Located on the platform of the 30S subunit. The chain is Small ribosomal subunit protein uS11 from Sulfolobus acidocaldarius (strain ATCC 33909 / DSM 639 / JCM 8929 / NBRC 15157 / NCIMB 11770).